We begin with the raw amino-acid sequence, 262 residues long: DEIVLVGGSTRIPKIQQLVKEFFNGKEPSRGINPDEAVAYGAAVQAGVLSGDQDTGDLVLLDVCPLTLGIETVGGVMTKLIPRNTVVPTKKSQIFSTASDNQPTVTIKVYEGERPLTKDNHLLGTFDLTGIPPAPRGVPQIEVTFEIDVNGILRVTAEDKGTGNKNKITITNDQNRLTPEEIERMVNDAEKFAEEDKKLKERIDTRNELESYAYCLKNQIGDKEKLGGKLSSEDKETMEKAVEEKIEWLESHQDADIEDFKA.

Residue 8–11 (GSTR) participates in ATP binding. The interdomain linker stretch occupies residues 53–63 (QDTGDLVLLDV). Residues 64–144 (CPLTLGIETV…PRGVPQIEVT (81 aa)) form a substrate-binding (SBD) region. Lys-91 bears the N6-succinyllysine mark. Residue Arg-136 is modified to Omega-N-methylarginine. Thr-162 bears the O-AMP-threonine; alternate mark. At Thr-162 the chain carries Phosphothreonine; alternate. Lys-229 carries the N6,N6,N6-trimethyllysine; by METTL21A; in vitro modification. Lys-229 is modified (N6,N6-dimethyllysine; alternate). Lys-229 bears the N6-methyllysine; alternate mark. An N6-methyllysine modification is found at Lys-235.

The protein belongs to the heat shock protein 70 family. Monomer and homooligomer; homooligomerization via the interdomain linker inactivates the chaperone activity and acts as a storage of HSPA5/BiP molecules. Interacts with DNAJC1 (via J domain). Component of an EIF2 complex at least composed of CELF1/CUGBP1, CALR, CALR3, EIF2S1, EIF2S2, HSP90B1 and HSPA5. Part of a large chaperone multiprotein complex comprising DNAJB11, HSP90B1, HSPA5, HYOU, PDIA2, PDIA4, PDIA6, PPIB, SDF2L1, UGGT1 and very small amounts of ERP29, but not, or at very low levels, CALR nor CANX. Interacts with TMEM132A and TRIM21. May form a complex with ERLEC1, OS9, SEL1L and SYVN1. Interacts with DNAJC10. Interacts with DNAJB9/ERdj4; leading to recruit HSPA5/BiP to ERN1/IRE1. Interacts with ERN1/IRE1 (via luminal domain); the interaction takes place following interaction with DNAJB9/ERdj4 and leads to inactivate ERN1/IRE1, the interaction also competitively inhibits ERN1 interaction with MANF. Interacts directly with MANF (via SAP domain); the interaction inhibits ATP binding to HSPA5/BiP and subsequent nucleotide exchange. Interacts with EIF2AK3/PERK (via luminal domain); interaction leads to inactivate EIF2AK3/PERK. Interacts with MX1. Interacts with METTL23. Interacts with CEMIP; the interaction induces calcium leakage from the endoplasmic reticulum and cell migration. Interacts with PCSK4 form; the interaction takes place in the endoplasmic reticulum. Interacts with CIPC. Interacts with CCDC88B (via C-terminus); the interaction opposes ERN1-mediated JNK activation, protecting against apoptosis. Interacts with INPP5K; necessary for INPP5K localization at the endoplasmic reticulum. Interacts with MANF; the interaction is direct. Interacts with LOXL2; leading to activate the ERN1/IRE1-XBP1 pathway of the unfolded protein response. Interacts with CLU under stressed condition; interaction increases CLU protein stability; facilitates its retrotranslocation and redistribution to the mitochondria; cooperatively suppress stress-induced apoptosis by stabilizing mitochondrial membrane integrity. Interacts with CCDC47. Interacts with CLN3. Interacts with ELAPOR1; may regulate the function of HSPA5 in apoptosis and cell proliferation. Interacts with CASP7. Interacts with ILDR2; the interaction stabilizes ILDR2 expression. Interacts with ADAM7. In terms of processing, in unstressed cells, AMPylation at Thr-162 by FICD inactivates the chaperome activity: AMPylated form is locked in a relatively inert state and only weakly stimulated by J domain-containing proteins. In response to endoplasmic reticulum stress, de-AMPylation by the same protein, FICD, restores the chaperone activity.

It localises to the endoplasmic reticulum lumen. It is found in the melanosome. Its subcellular location is the cytoplasm. The protein localises to the cell surface. It catalyses the reaction ATP + H2O = ADP + phosphate + H(+). The chaperone activity is regulated by ATP-induced allosteric coupling of the nucleotide-binding (NBD) and substrate-binding (SBD) domains. In the ADP-bound and nucleotide-free (apo) states, the two domains have little interaction. In contrast, in the ATP-bound state the two domains are tightly coupled, which results in drastically accelerated kinetics in both binding and release of polypeptide substrates. J domain-containing co-chaperones (DNAJB9/ERdj4 or DNAJC10/ERdj5) stimulate the ATPase activity and are required for efficient substrate recognition by HSPA5/BiP. Homooligomerization inactivates participating HSPA5/BiP protomers and probably act as reservoirs to store HSPA5/BiP molecules when they are not needed by the cell. Endoplasmic reticulum chaperone that plays a key role in protein folding and quality control in the endoplasmic reticulum lumen. Involved in the correct folding of proteins and degradation of misfolded proteins via its interaction with DNAJC10/ERdj5, probably to facilitate the release of DNAJC10/ERdj5 from its substrate. Acts as a key repressor of the EIF2AK3/PERK and ERN1/IRE1-mediated unfolded protein response (UPR). In the unstressed endoplasmic reticulum, recruited by DNAJB9/ERdj4 to the luminal region of ERN1/IRE1, leading to disrupt the dimerization of ERN1/IRE1, thereby inactivating ERN1/IRE1. Also binds and inactivates EIF2AK3/PERK in unstressed cells. Accumulation of misfolded protein in the endoplasmic reticulum causes release of HSPA5/BiP from ERN1/IRE1 and EIF2AK3/PERK, allowing their homodimerization and subsequent activation. Plays an auxiliary role in post-translational transport of small presecretory proteins across endoplasmic reticulum (ER). May function as an allosteric modulator for SEC61 channel-forming translocon complex, likely cooperating with SEC62 to enable the productive insertion of these precursors into SEC61 channel. Appears to specifically regulate translocation of precursors having inhibitory residues in their mature region that weaken channel gating. May also play a role in apoptosis and cell proliferation. This chain is Endoplasmic reticulum chaperone BiP, found in Sus scrofa (Pig).